The following is a 584-amino-acid chain: Arginine--tRNA ligase (584 aa).

The short motif at 129–139 (ANPTGPLHVGH) is the 'HIGH' region element.

Belongs to the class-I aminoacyl-tRNA synthetase family. Monomer.

The protein resides in the cytoplasm. The catalysed reaction is tRNA(Arg) + L-arginine + ATP = L-arginyl-tRNA(Arg) + AMP + diphosphate. The protein is Arginine--tRNA ligase of Halorhodospira halophila (strain DSM 244 / SL1) (Ectothiorhodospira halophila (strain DSM 244 / SL1)).